Reading from the N-terminus, the 416-residue chain is UDP-N-acetylglucosamine 1-carboxyvinyltransferase (416 aa).

22-23 (KN) is a phosphoenolpyruvate binding site. Arginine 92 is a binding site for UDP-N-acetyl-alpha-D-glucosamine. Catalysis depends on cysteine 116, which acts as the Proton donor. A 2-(S-cysteinyl)pyruvic acid O-phosphothioketal modification is found at cysteine 116. UDP-N-acetyl-alpha-D-glucosamine contacts are provided by residues 121–125 (RPVDQ), aspartate 304, and isoleucine 326.

This sequence belongs to the EPSP synthase family. MurA subfamily.

It localises to the cytoplasm. It catalyses the reaction phosphoenolpyruvate + UDP-N-acetyl-alpha-D-glucosamine = UDP-N-acetyl-3-O-(1-carboxyvinyl)-alpha-D-glucosamine + phosphate. It functions in the pathway cell wall biogenesis; peptidoglycan biosynthesis. In terms of biological role, cell wall formation. Adds enolpyruvyl to UDP-N-acetylglucosamine. The chain is UDP-N-acetylglucosamine 1-carboxyvinyltransferase from Cupriavidus necator (strain ATCC 17699 / DSM 428 / KCTC 22496 / NCIMB 10442 / H16 / Stanier 337) (Ralstonia eutropha).